Consider the following 327-residue polypeptide: Phenylalanine--tRNA ligase alpha subunit (327 aa).

Mg(2+) is bound at residue Glu252.

Belongs to the class-II aminoacyl-tRNA synthetase family. Phe-tRNA synthetase alpha subunit type 1 subfamily. Tetramer of two alpha and two beta subunits. Requires Mg(2+) as cofactor.

It localises to the cytoplasm. It catalyses the reaction tRNA(Phe) + L-phenylalanine + ATP = L-phenylalanyl-tRNA(Phe) + AMP + diphosphate + H(+). The chain is Phenylalanine--tRNA ligase alpha subunit from Yersinia pestis bv. Antiqua (strain Angola).